The following is a 55-amino-acid chain: UPF0291 protein CA_C2726 (55 aa).

It belongs to the UPF0291 family.

It localises to the cytoplasm. This Clostridium acetobutylicum (strain ATCC 824 / DSM 792 / JCM 1419 / IAM 19013 / LMG 5710 / NBRC 13948 / NRRL B-527 / VKM B-1787 / 2291 / W) protein is UPF0291 protein CA_C2726.